Consider the following 340-residue polypeptide: Mitochondrial carrier protein CoAc1 (340 aa).

Transmembrane regions (helical) follow at residues 22-42 (ALDLLPVYAKELIAGGAAGAF), 85-105 (FYKGNGASVLRIVPYAALHYM), 130-147 (LLAGSAAGGTAVLCTYPL), 199-219 (GVGPTLIGILPYAGLKFYIYE), 237-257 (LSCGALAGLFGQTLTYPLDVV), and 297-317 (FAGLSLNYVKVVPSVAIGFTT). 3 Solcar repeats span residues 27–113 (PVYA…YRCW), 124–224 (TGPV…LKSQ), and 231–324 (DSVI…MKAL).

The protein belongs to the mitochondrial carrier (TC 2.A.29) family. Expressed throughout the plant.

The protein localises to the mitochondrion inner membrane. Its function is as follows. Required for the accumulation of coenzyme A in the mitochondrial matrix. This chain is Mitochondrial carrier protein CoAc1, found in Zea mays (Maize).